The following is a 182-amino-acid chain: Ribosome-recycling factor (182 aa).

The protein belongs to the RRF family.

Its subcellular location is the cytoplasm. In terms of biological role, responsible for the release of ribosomes from messenger RNA at the termination of protein biosynthesis. May increase the efficiency of translation by recycling ribosomes from one round of translation to another. The protein is Ribosome-recycling factor of Nostoc sp. (strain PCC 7120 / SAG 25.82 / UTEX 2576).